The following is a 520-amino-acid chain: Bifunctional purine biosynthesis protein PurH (520 aa).

An MGS-like domain is found at 1 to 147 (MAKIGRALIS…KNNRDVTVVV (147 aa)).

This sequence belongs to the PurH family.

The enzyme catalyses (6R)-10-formyltetrahydrofolate + 5-amino-1-(5-phospho-beta-D-ribosyl)imidazole-4-carboxamide = 5-formamido-1-(5-phospho-D-ribosyl)imidazole-4-carboxamide + (6S)-5,6,7,8-tetrahydrofolate. The catalysed reaction is IMP + H2O = 5-formamido-1-(5-phospho-D-ribosyl)imidazole-4-carboxamide. It functions in the pathway purine metabolism; IMP biosynthesis via de novo pathway; 5-formamido-1-(5-phospho-D-ribosyl)imidazole-4-carboxamide from 5-amino-1-(5-phospho-D-ribosyl)imidazole-4-carboxamide (10-formyl THF route): step 1/1. Its pathway is purine metabolism; IMP biosynthesis via de novo pathway; IMP from 5-formamido-1-(5-phospho-D-ribosyl)imidazole-4-carboxamide: step 1/1. In Geobacter sp. (strain M21), this protein is Bifunctional purine biosynthesis protein PurH.